The chain runs to 167 residues: Leptin (167 aa).

The signal sequence occupies residues Met1 to Ala21. Cys117 and Cys167 are joined by a disulfide.

It belongs to the leptin family.

It localises to the secreted. Its function is as follows. Key player in the regulation of energy balance and body weight control. Once released into the circulation, has central and peripheral effects by binding LEPR, found in many tissues, which results in the activation of several major signaling pathways. In the hypothalamus, acts as an appetite-regulating factor that induces a decrease in food intake and an increase in energy consumption by inducing anorexinogenic factors and suppressing orexigenic neuropeptides, also regulates bone mass and secretion of hypothalamo-pituitary-adrenal hormones. In the periphery, increases basal metabolism, influences reproductive function, regulates pancreatic beta-cell function and insulin secretion, is pro-angiogenic for endothelial cell and affects innate and adaptive immunity. In the arcuate nucleus of the hypothalamus, activates by depolarization POMC neurons inducing FOS and SOCS3 expression to release anorexigenic peptides and inhibits by hyperpolarization NPY neurons inducing SOCS3 with a consequent reduction on release of orexigenic peptides. In addition to its known satiety inducing effect, has a modulatory role in nutrient absorption. In the intestine, reduces glucose absorption by enterocytes by activating PKC and leading to a sequential activation of p38, PI3K and ERK signaling pathways which exerts an inhibitory effect on glucose absorption. Acts as a growth factor on certain tissues, through the activation of different signaling pathways increases expression of genes involved in cell cycle regulation such as CCND1, via JAK2-STAT3 pathway, or VEGFA, via MAPK1/3 and PI3K-AKT1 pathways. May also play an apoptotic role via JAK2-STAT3 pathway and up-regulation of BIRC5 expression. Pro-angiogenic, has mitogenic activity on vascular endothelial cells and plays a role in matrix remodeling by regulating the expression of matrix metalloproteinases (MMPs) and tissue inhibitors of metalloproteinases (TIMPs). In innate immunity, modulates the activity and function of neutrophils by increasing chemotaxis and the secretion of oxygen radicals. Increases phagocytosis by macrophages and enhances secretion of pro-inflammatory mediators. Increases cytotoxic ability of NK cells. Plays a pro-inflammatory role, in synergy with IL1B, by inducing NOS2 which promotes the production of IL6, IL8 and Prostaglandin E2, through a signaling pathway that involves JAK2, PI3K, MAP2K1/MEK1 and MAPK14/p38. In adaptive immunity, promotes the switch of memory T-cells towards T helper-1 cell immune responses. Increases CD4(+)CD25(-) T-cell proliferation and reduces autophagy during TCR (T-cell receptor) stimulation, through MTOR signaling pathway activation and BCL2 up-regulation. In Capra hircus (Goat), this protein is Leptin (LEP).